Consider the following 203-residue polypeptide: HTH-type transcriptional regulator BetI (203 aa).

One can recognise an HTH tetR-type domain in the interval 8–68 (PVRRKALVDA…ATIRSLLGKL (61 aa)). Residues 31–50 (TMSEIARTAGVSPALAHHYF) constitute a DNA-binding region (H-T-H motif).

Its pathway is amine and polyamine biosynthesis; betaine biosynthesis via choline pathway [regulation]. In terms of biological role, repressor involved in the biosynthesis of the osmoprotectant glycine betaine. It represses transcription of the choline transporter BetT and the genes of BetAB involved in the synthesis of glycine betaine. In Rhizobium meliloti (strain 1021) (Ensifer meliloti), this protein is HTH-type transcriptional regulator BetI.